The primary structure comprises 989 residues: Phosphoenolpyruvate carboxylase (989 aa).

Active-site residues include His175 and Lys630.

The protein belongs to the PEPCase type 1 family. Mg(2+) serves as cofactor.

The catalysed reaction is oxaloacetate + phosphate = phosphoenolpyruvate + hydrogencarbonate. Functionally, forms oxaloacetate, a four-carbon dicarboxylic acid source for the tricarboxylic acid cycle. This Prochlorococcus marinus (strain MIT 9312) protein is Phosphoenolpyruvate carboxylase.